The following is a 332-amino-acid chain: Biotin synthase (332 aa).

The Radical SAM core domain occupies 51-279 (YKVQLASLLS…LSRVRLSAGR (229 aa)). Positions 66, 70, and 73 each coordinate [4Fe-4S] cluster. [2Fe-2S] cluster is bound by residues Cys110, Cys142, Cys202, and Arg274.

Belongs to the radical SAM superfamily. Biotin synthase family. As to quaternary structure, homodimer. [4Fe-4S] cluster serves as cofactor. Requires [2Fe-2S] cluster as cofactor.

It catalyses the reaction (4R,5S)-dethiobiotin + (sulfur carrier)-SH + 2 reduced [2Fe-2S]-[ferredoxin] + 2 S-adenosyl-L-methionine = (sulfur carrier)-H + biotin + 2 5'-deoxyadenosine + 2 L-methionine + 2 oxidized [2Fe-2S]-[ferredoxin]. Its pathway is cofactor biosynthesis; biotin biosynthesis; biotin from 7,8-diaminononanoate: step 2/2. In terms of biological role, catalyzes the conversion of dethiobiotin (DTB) to biotin by the insertion of a sulfur atom into dethiobiotin via a radical-based mechanism. The sequence is that of Biotin synthase from Prochlorococcus marinus (strain MIT 9211).